Consider the following 354-residue polypeptide: MNGTEGENFYIPMSNKTGVVRSPFDYPQYYLAEPWKFSVLAAYMFFLIIAGFPVNFLTLYVTIQHKKLRQPLNYILLNLAVADLFMIFGGFPSTMITSMNGYFVFGPSGCNFEGFFATLGGEIGLWSLVVLAIERYVVVCKPMSNFRFGSQHAFMGVGLTWIMAMACAFPPLVGWSRYIPEGMQCSCGIDYYTLKPEVNNESFVIYMFVVHFSIPLTIIFFCYGRLVCTVKEAAAQQQESETTQRAEREVTRMVIIMVIAFLICWLPYASVAFFIFCNQGSEFGPIFMTIPAFFAKAASLYNPLIYILMNKQFRNCMITTICCGKNPFEEEESTSASASKTEASSVSSSQVAPA.

Topologically, residues 1 to 36 (MNGTEGENFYIPMSNKTGVVRSPFDYPQYYLAEPWK) are extracellular. N-linked (GlcNAc...) asparagine glycans are attached at residues Asn-2 and Asn-15. A helical transmembrane segment spans residues 37-61 (FSVLAAYMFFLIIAGFPVNFLTLYV). The Cytoplasmic segment spans residues 62 to 73 (TIQHKKLRQPLN). The chain crosses the membrane as a helical span at residues 74–96 (YILLNLAVADLFMIFGGFPSTMI). The Extracellular portion of the chain corresponds to 97–110 (TSMNGYFVFGPSGC). A disulfide bridge links Cys-110 with Cys-187. The chain crosses the membrane as a helical span at residues 111–133 (NFEGFFATLGGEIGLWSLVVLAI). The 'Ionic lock' involved in activated form stabilization signature appears at 134 to 136 (ERY). Topologically, residues 134-152 (ERYVVVCKPMSNFRFGSQH) are cytoplasmic. Residues 153–173 (AFMGVGLTWIMAMACAFPPLV) traverse the membrane as a helical segment. The Extracellular portion of the chain corresponds to 174–202 (GWSRYIPEGMQCSCGIDYYTLKPEVNNES). An N-linked (GlcNAc...) asparagine glycan is attached at Asn-200. Residues 203 to 224 (FVIYMFVVHFSIPLTIIFFCYG) traverse the membrane as a helical segment. The Cytoplasmic portion of the chain corresponds to 225 to 252 (RLVCTVKEAAAQQQESETTQRAEREVTR). A helical membrane pass occupies residues 253–274 (MVIIMVIAFLICWLPYASVAFF). Topologically, residues 275–286 (IFCNQGSEFGPI) are extracellular. The chain crosses the membrane as a helical span at residues 287-308 (FMTIPAFFAKAASLYNPLIYIL). An N6-(retinylidene)lysine modification is found at Lys-296. Residues 309–354 (MNKQFRNCMITTICCGKNPFEEEESTSASASKTEASSVSSSQVAPA) lie on the Cytoplasmic side of the membrane. 2 S-palmitoyl cysteine lipidation sites follow: Cys-322 and Cys-323. The disordered stretch occupies residues 333–354 (STSASASKTEASSVSSSQVAPA). Residues 334 to 354 (TSASASKTEASSVSSSQVAPA) show a composition bias toward low complexity.

The protein belongs to the G-protein coupled receptor 1 family. Opsin subfamily. Post-translationally, phosphorylated on some or all of the serine and threonine residues present in the C-terminal region. In terms of processing, contains one covalently linked retinal chromophore.

It is found in the membrane. Its subcellular location is the cell projection. It localises to the cilium. The protein resides in the photoreceptor outer segment. Photoreceptor required for image-forming vision at low light intensity. While most salt water fish species use retinal as chromophore, most freshwater fish use 3-dehydroretinal, or a mixture of retinal and 3-dehydroretinal. Light-induced isomerization of 11-cis to all-trans retinal triggers a conformational change that activates signaling via G-proteins. Subsequent receptor phosphorylation mediates displacement of the bound G-protein alpha subunit by arrestin and terminates signaling. The sequence is that of Rhodopsin (rho) from Scyliorhinus canicula (Small-spotted catshark).